Consider the following 579-residue polypeptide: Keratinocyte proline-rich protein (579 aa).

A Phosphoserine modification is found at S394. The segment at E526–F579 is disordered. Residues F551–G561 are compositionally biased toward basic and acidic residues.

Expressed in the upper layer of epidermis and psoriasis (at protein level). Expressed in the upper layer of epidermis and psoriasis.

It is found in the cytoplasm. The polypeptide is Keratinocyte proline-rich protein (KPRP) (Homo sapiens (Human)).